Consider the following 405-residue polypeptide: Acetylornithine/succinyldiaminopimelate aminotransferase (405 aa).

Residues 108-109 (GT) and Phe141 each bind pyridoxal 5'-phosphate. Residue Arg144 participates in N(2)-acetyl-L-ornithine binding. Residue 226-229 (DEVQ) coordinates pyridoxal 5'-phosphate. The residue at position 255 (Lys255) is an N6-(pyridoxal phosphate)lysine. A N(2)-acetyl-L-ornithine-binding site is contributed by Ser283. Thr284 provides a ligand contact to pyridoxal 5'-phosphate.

Belongs to the class-III pyridoxal-phosphate-dependent aminotransferase family. ArgD subfamily. Homodimer. Pyridoxal 5'-phosphate is required as a cofactor.

The protein localises to the cytoplasm. It catalyses the reaction N(2)-acetyl-L-ornithine + 2-oxoglutarate = N-acetyl-L-glutamate 5-semialdehyde + L-glutamate. The catalysed reaction is N-succinyl-(2S,6S)-2,6-diaminopimelate + 2-oxoglutarate = (S)-2-succinylamino-6-oxoheptanedioate + L-glutamate. It functions in the pathway amino-acid biosynthesis; L-arginine biosynthesis; N(2)-acetyl-L-ornithine from L-glutamate: step 4/4. The protein operates within amino-acid biosynthesis; L-lysine biosynthesis via DAP pathway; LL-2,6-diaminopimelate from (S)-tetrahydrodipicolinate (succinylase route): step 2/3. Its activity is regulated as follows. Inhibited by gabaculine (Gcn). Its function is as follows. Involved in both the arginine and lysine biosynthetic pathways. This is Acetylornithine/succinyldiaminopimelate aminotransferase from Salmonella typhimurium (strain LT2 / SGSC1412 / ATCC 700720).